The following is a 204-amino-acid chain: uncharacterized protein (204 aa).

The disordered stretch occupies residues 47-108 (TDSSDDEGGA…EDSDEEGEGG (62 aa)). Acidic residues predominate over residues 49-106 (SSDDEGGASSGDEGEASSDDEGDASSDDEEEASSDGEGVVEDEETLDAEGEDSDEEGE).

The protein resides in the mitochondrion. This is an uncharacterized protein from Paramecium tetraurelia.